Reading from the N-terminus, the 912-residue chain is DNA ligase 4 (912 aa).

Residues Glu-271, Thr-272, Lys-273, Leu-274, Arg-278, Glu-331, Lys-345, Phe-367, Glu-427, Lys-432, Lys-449, and Lys-451 each contribute to the ATP site. The active-site N6-AMP-lysine intermediate is Lys-273. Glu-331 lines the Mg(2+) pocket. Glu-427 provides a ligand contact to Mg(2+). Positions 610-620 are required for catalytic activity; that stretch reads LATKHLHVGDD. BRCT domains are found at residues 654-743 and 846-912; these read KVSN…PRFM and LRFH…QYLL.

The protein belongs to the ATP-dependent DNA ligase family. As to quaternary structure, interacts with XRCC4; the LIG4-XRCC4 subcomplex has a 1:2 stoichiometry and XRCC4 is required for LIG4 stability. Component of the core long-range non-homologous end joining (NHEJ) complex (also named DNA-PK complex) composed of PRKDC, LIG4, XRCC4, XRCC6/Ku70, XRCC5/Ku86 and NHEJ1/XLF. Additional component of the NHEJ complex includes PAXX. Following autophosphorylation, PRKDC dissociates from DNA, leading to formation of the short-range NHEJ complex, composed of LIG4, XRCC4, XRCC6/Ku70, XRCC5/Ku86 and NHEJ1/XLF. Interacts with DCLRE1C; the interaction is direct. Interacts with APLF. Requires Mg(2+) as cofactor.

It localises to the nucleus. It carries out the reaction ATP + (deoxyribonucleotide)n-3'-hydroxyl + 5'-phospho-(deoxyribonucleotide)m = (deoxyribonucleotide)n+m + AMP + diphosphate.. DNA ligase involved in DNA non-homologous end joining (NHEJ); required for double-strand break (DSB) repair and V(D)J recombination. Catalyzes the NHEJ ligation step of the broken DNA during DSB repair by resealing the DNA breaks after the gap filling is completed. Joins single-strand breaks in a double-stranded polydeoxynucleotide in an ATP-dependent reaction. LIG4 is mechanistically flexible: it can ligate nicks as well as compatible DNA overhangs alone, while in the presence of XRCC4, it can ligate ends with 2-nucleotides (nt) microhomology and 1-nt gaps. Forms a subcomplex with XRCC4; the LIG4-XRCC4 subcomplex is responsible for the NHEJ ligation step and XRCC4 enhances the joining activity of LIG4. Binding of the LIG4-XRCC4 complex to DNA ends is dependent on the assembly of the DNA-dependent protein kinase complex DNA-PK to these DNA ends. LIG4 regulates nuclear localization of XRCC4. This Cricetulus griseus (Chinese hamster) protein is DNA ligase 4.